A 150-amino-acid polypeptide reads, in one-letter code: D-aminoacyl-tRNA deacylase (150 aa).

The Gly-cisPro motif, important for rejection of L-amino acids signature appears at 136–137 (GP).

Belongs to the DTD family. As to quaternary structure, homodimer.

The protein localises to the cytoplasm. The catalysed reaction is glycyl-tRNA(Ala) + H2O = tRNA(Ala) + glycine + H(+). It carries out the reaction a D-aminoacyl-tRNA + H2O = a tRNA + a D-alpha-amino acid + H(+). In terms of biological role, an aminoacyl-tRNA editing enzyme that deacylates mischarged D-aminoacyl-tRNAs. Also deacylates mischarged glycyl-tRNA(Ala), protecting cells against glycine mischarging by AlaRS. Acts via tRNA-based rather than protein-based catalysis; rejects L-amino acids rather than detecting D-amino acids in the active site. By recycling D-aminoacyl-tRNA to D-amino acids and free tRNA molecules, this enzyme counteracts the toxicity associated with the formation of D-aminoacyl-tRNA entities in vivo and helps enforce protein L-homochirality. The chain is D-aminoacyl-tRNA deacylase from Staphylococcus carnosus (strain TM300).